A 191-amino-acid polypeptide reads, in one-letter code: Elongation factor P (191 aa).

Lysine 34 carries the post-translational modification N6-(3,6-diaminohexanoyl)-5-hydroxylysine.

Belongs to the elongation factor P family. Post-translationally, may be beta-lysylated on the epsilon-amino group of Lys-34 by the combined action of EpmA and EpmB, and then hydroxylated on the C5 position of the same residue by EpmC (if this protein is present). Lysylation is critical for the stimulatory effect of EF-P on peptide-bond formation. The lysylation moiety may extend toward the peptidyltransferase center and stabilize the terminal 3-CCA end of the tRNA. Hydroxylation of the C5 position on Lys-34 may allow additional potential stabilizing hydrogen-bond interactions with the P-tRNA.

It localises to the cytoplasm. It functions in the pathway protein biosynthesis; polypeptide chain elongation. In terms of biological role, involved in peptide bond synthesis. Alleviates ribosome stalling that occurs when 3 or more consecutive Pro residues or the sequence PPG is present in a protein, possibly by augmenting the peptidyl transferase activity of the ribosome. Modification of Lys-34 is required for alleviation. In Colwellia psychrerythraea (strain 34H / ATCC BAA-681) (Vibrio psychroerythus), this protein is Elongation factor P.